A 71-amino-acid chain; its full sequence is Small ribosomal subunit protein bS21 (71 aa).

Residues 40 to 71 are disordered; sequence KPTQERKRKAAAAVKRNIRRTSRDVTKRKRLY. The segment covering 45–71 has biased composition (basic residues); that stretch reads RKRKAAAAVKRNIRRTSRDVTKRKRLY.

It belongs to the bacterial ribosomal protein bS21 family.

This is Small ribosomal subunit protein bS21 from Xylella fastidiosa (strain M23).